The following is a 472-amino-acid chain: Eukaryotic translation initiation factor 2 subunit 3B (472 aa).

Ala-2 carries the post-translational modification N-acetylalanine. Ser-16 bears the Phosphoserine mark. Positions Gln-39–Arg-248 constitute a tr-type G domain. Positions Gly-48–Ser-55 are G1. Residue Ala-51–Thr-56 coordinates GTP. The tract at residues Asn-76 to Lys-80 is G2. A G3 region spans residues Asp-134–Gly-137. Residues Asn-190 to Asp-193 and Ser-225 to Gln-227 contribute to the GTP site. The interval Asn-190–Asp-193 is G4. Positions Ser-225 to Gln-227 are G5.

Belongs to the TRAFAC class translation factor GTPase superfamily. Classic translation factor GTPase family. EIF2G subfamily. As to quaternary structure, eIF2 is a heterotrimer composed of an alpha, a beta and a gamma chain. eIF2 is member of the 43S pre-initiation complex (43S PIC). Specifically expressed in testis at the mRNA level.

The enzyme catalyses GTP + H2O = GDP + phosphate + H(+). Functionally, member of the eIF2 complex that functions in the early steps of protein synthesis by forming a ternary complex with GTP and initiator tRNA. This complex binds to a 40S ribosomal subunit, followed by mRNA binding to form the 43S pre-initiation complex (43S PIC). Junction of the 60S ribosomal subunit to form the 80S initiation complex is preceded by hydrolysis of the GTP bound to eIF2 and release of an eIF2-GDP binary complex. In order for eIF2 to recycle and catalyze another round of initiation, the GDP bound to eIF2 must exchange with GTP by way of a reaction catalyzed by eIF-2B. This chain is Eukaryotic translation initiation factor 2 subunit 3B, found in Homo sapiens (Human).